The chain runs to 1063 residues: Coiled-coil domain-containing protein 187 (1063 aa).

7 disordered regions span residues 1 to 41 (MPTL…AADW), 62 to 184 (RWPG…SRLH), 219 to 278 (RVEA…KDED), 300 to 319 (PPPVLRRHHSKDPSRDPALT), 392 to 484 (RKGG…ERLG), 496 to 539 (GQAC…ATQP), and 551 to 658 (WEDP…LEEK). Residues 111 to 124 (SSVSSGRLSCSSGG) are compositionally biased toward low complexity. The segment covering 146-160 (RKSDARLEQLRDKIR) has biased composition (basic and acidic residues). Polar residues predominate over residues 163–181 (AWQQGSCASLGTSAPSSAS). The segment covering 219-233 (RVEAKASHGQGRELS) has biased composition (basic and acidic residues). 2 stretches are compositionally biased toward basic and acidic residues: residues 431 to 442 (TERKHSSLERAR) and 472 to 484 (SFQRPESPHERLG). Low complexity predominate over residues 508-517 (QRQGPSSQRP). A coiled-coil region spans residues 816–851 (HLRHKQAQLQALETTAKVLKQRVDSLTAKLQGAEAL). The segment at 1010–1030 (PRSCGKGDPADRPWAGWSGGR) is disordered.

The polypeptide is Coiled-coil domain-containing protein 187 (Homo sapiens (Human)).